We begin with the raw amino-acid sequence, 57 residues long: Protein translocase subunit SecE (57 aa).

Residues 33 to 53 (GAGIFLVGLLGFIIFAVMSFL) traverse the membrane as a helical segment.

Belongs to the SecE/SEC61-gamma family. As to quaternary structure, component of the Sec protein translocase complex. Heterotrimer consisting of SecY (alpha), SecG (beta) and SecE (gamma) subunits. The heterotrimers can form oligomers, although 1 heterotrimer is thought to be able to translocate proteins. Interacts with the ribosome. May interact with SecDF, and other proteins may be involved.

It is found in the cell membrane. In terms of biological role, essential subunit of the Sec protein translocation channel SecYEG. Clamps together the 2 halves of SecY. May contact the channel plug during translocation. In Haloferax mediterranei (strain ATCC 33500 / DSM 1411 / JCM 8866 / NBRC 14739 / NCIMB 2177 / R-4) (Halobacterium mediterranei), this protein is Protein translocase subunit SecE.